Reading from the N-terminus, the 1093-residue chain is Non-canonical non-ribosomal peptide synthetase ascB (1093 aa).

The segment covering Met1–Gly26 has biased composition (low complexity). The segment at Met1–Ile27 is disordered. Positions Glu35–Asn392 are adenylation (A) domain. The Carrier domain maps to Asp591–Ser678. Residue Ser627 is modified to O-(pantetheine 4'-phosphoryl)serine. Positions Leu721–Val971 are thioester reductase (TR) domain.

The protein belongs to the NRP synthetase family.

The catalysed reaction is ilicicolinate B + AH2 + ATP = ilicicolin B + A + AMP + diphosphate. Its pathway is secondary metabolite biosynthesis; terpenoid biosynthesis. In terms of biological role, non-canonical non-ribosomal peptide synthetase; part of the asc-1 gene cluster that mediates the biosynthesis of both ascochlorin and ascofuranone, a strong inhibitor of cyanide-insensitive alternative oxidases and a promising drug candidate against African trypanosomiasis. The first step in the pathway is performed by the non-reducing polyketide synthase ascC that produces orsellinic acid by condensing acetyl-CoA with 3 malonyl-CoA units. Orsellinic acid is then prenylated by the prenyltransferase ascA to yield ilicicolinic acid B. Ilicicolinic acid B is further reduced to ilicicolin B by the reductase ascB. The halogenase ascD then chlorinates ilicicolin B to produce ilicicolin A which is converted to ilicicolin A epoxide by the cytochrome P450 monooxygenase ascE that catalyzes stereoselective epoxidation of the terminal double bond of the prenyl group. Ilicicolin A epoxide is the last common precursor for the biosynthesis of ascofuranone and ascochlorin. The terpene cyclase ascF produces a monocyclic terpene, and the cyclization reaction is proposed to be initiated by protonation of the terminal epoxide of ilicicolin A epoxide to generate a monocyclic tertiarycation, which is followed by a series of hydride and methyl shifts with abstraction of proton, leading to the formation of the (14S,15R,19R)-trimethylcyclohexanone ring structure of ilicicolin C, which is finally reduced to ascochlorin by the dehydrogenase ascG. On the other hand, ilicicolin A epoxide is hydroxylated by the cytochrome P450 monooxygenase ascH, and the resultant product is cyclized by the terpene cyclase ascI to ascofuranol via protonation-initiated epoxide ring opening, which facilitates the 6-endo-tet cyclization to form the tetrahy-drofuran ring. Finally, ascofuranol is oxidized into ascofuranone by ascJ. This chain is Non-canonical non-ribosomal peptide synthetase ascB, found in Acremonium egyptiacum (Oospora egyptiaca).